A 404-amino-acid chain; its full sequence is CCA-adding enzyme (404 aa).

Positions 32 and 35 each coordinate ATP. CTP is bound by residues glycine 32 and arginine 35. Mg(2+)-binding residues include aspartate 45 and aspartate 47. Residues arginine 116, aspartate 159, arginine 162, arginine 165, and arginine 168 each contribute to the ATP site. Residues arginine 116, aspartate 159, arginine 162, arginine 165, and arginine 168 each contribute to the CTP site.

Belongs to the tRNA nucleotidyltransferase/poly(A) polymerase family. Bacterial CCA-adding enzyme type 3 subfamily. Homodimer. Mg(2+) serves as cofactor.

The catalysed reaction is a tRNA precursor + 2 CTP + ATP = a tRNA with a 3' CCA end + 3 diphosphate. It carries out the reaction a tRNA with a 3' CCA end + 2 CTP + ATP = a tRNA with a 3' CCACCA end + 3 diphosphate. Functionally, catalyzes the addition and repair of the essential 3'-terminal CCA sequence in tRNAs without using a nucleic acid template. Adds these three nucleotides in the order of C, C, and A to the tRNA nucleotide-73, using CTP and ATP as substrates and producing inorganic pyrophosphate. tRNA 3'-terminal CCA addition is required both for tRNA processing and repair. Also involved in tRNA surveillance by mediating tandem CCA addition to generate a CCACCA at the 3' terminus of unstable tRNAs. While stable tRNAs receive only 3'-terminal CCA, unstable tRNAs are marked with CCACCA and rapidly degraded. This chain is CCA-adding enzyme, found in Ligilactobacillus salivarius (strain UCC118) (Lactobacillus salivarius).